The following is an 837-amino-acid chain: Periplasmic nitrate reductase (837 aa).

Positions Met-1–Ala-32 form a signal peptide, tat-type signal. In terms of domain architecture, 4Fe-4S Mo/W bis-MGD-type spans Leu-44–Asp-100. Residues Cys-51, Cys-54, Cys-58, and Cys-86 each contribute to the [4Fe-4S] cluster site. Residues Lys-88, Gln-155, Asn-180, Cys-184, Trp-217 to Met-224, Ser-248 to His-252, Gln-267 to Asp-269, Met-378, Gln-382, Asn-488, Ser-514 to Asp-515, Lys-537, Asp-564, and Thr-724 to Ser-733 each bind Mo-bis(molybdopterin guanine dinucleotide). Trp-800 contributes to the substrate binding site. Mo-bis(molybdopterin guanine dinucleotide)-binding residues include Asn-808 and Lys-825.

This sequence belongs to the prokaryotic molybdopterin-containing oxidoreductase family. NasA/NapA/NarB subfamily. Component of the periplasmic nitrate reductase NapAB complex composed of NapA and NapB. [4Fe-4S] cluster serves as cofactor. Mo-bis(molybdopterin guanine dinucleotide) is required as a cofactor. Post-translationally, predicted to be exported by the Tat system. The position of the signal peptide cleavage has not been experimentally proven.

The protein localises to the periplasm. It catalyses the reaction 2 Fe(II)-[cytochrome] + nitrate + 2 H(+) = 2 Fe(III)-[cytochrome] + nitrite + H2O. In terms of biological role, catalytic subunit of the periplasmic nitrate reductase complex NapAB. Receives electrons from NapB and catalyzes the reduction of nitrate to nitrite. The protein is Periplasmic nitrate reductase of Bradyrhizobium diazoefficiens (strain JCM 10833 / BCRC 13528 / IAM 13628 / NBRC 14792 / USDA 110).